A 376-amino-acid chain; its full sequence is 3-dehydroquinate synthase (376 aa).

NAD(+)-binding positions include 115–119 (GVIGD), 139–140 (TS), Lys-152, and Lys-161. Residues Glu-194, His-256, and His-275 each coordinate Zn(2+).

This sequence belongs to the sugar phosphate cyclases superfamily. Dehydroquinate synthase family. Co(2+) serves as cofactor. Requires Zn(2+) as cofactor. The cofactor is NAD(+).

It localises to the cytoplasm. It carries out the reaction 7-phospho-2-dehydro-3-deoxy-D-arabino-heptonate = 3-dehydroquinate + phosphate. It participates in metabolic intermediate biosynthesis; chorismate biosynthesis; chorismate from D-erythrose 4-phosphate and phosphoenolpyruvate: step 2/7. Catalyzes the conversion of 3-deoxy-D-arabino-heptulosonate 7-phosphate (DAHP) to dehydroquinate (DHQ). This is 3-dehydroquinate synthase from Rhizobium leguminosarum bv. trifolii (strain WSM2304).